A 213-amino-acid polypeptide reads, in one-letter code: Orotate phosphoribosyltransferase (213 aa).

Residue Lys26 coordinates 5-phospho-alpha-D-ribose 1-diphosphate. 34–35 serves as a coordination point for orotate; it reads FF. 5-phospho-alpha-D-ribose 1-diphosphate is bound by residues 72–73, Arg99, Lys100, Lys103, His105, and 124–132; these read YK and DDVITAGTA. Thr128 and Arg156 together coordinate orotate.

It belongs to the purine/pyrimidine phosphoribosyltransferase family. PyrE subfamily. In terms of assembly, homodimer. It depends on Mg(2+) as a cofactor.

It carries out the reaction orotidine 5'-phosphate + diphosphate = orotate + 5-phospho-alpha-D-ribose 1-diphosphate. The protein operates within pyrimidine metabolism; UMP biosynthesis via de novo pathway; UMP from orotate: step 1/2. Catalyzes the transfer of a ribosyl phosphate group from 5-phosphoribose 1-diphosphate to orotate, leading to the formation of orotidine monophosphate (OMP). The chain is Orotate phosphoribosyltransferase from Alteromonas mediterranea (strain DSM 17117 / CIP 110805 / LMG 28347 / Deep ecotype).